The sequence spans 504 residues: Aspartyl/glutamyl-tRNA(Asn/Gln) amidotransferase subunit B (504 aa).

Belongs to the GatB/GatE family. GatB subfamily. As to quaternary structure, heterotrimer of A, B and C subunits.

The enzyme catalyses L-glutamyl-tRNA(Gln) + L-glutamine + ATP + H2O = L-glutaminyl-tRNA(Gln) + L-glutamate + ADP + phosphate + H(+). It carries out the reaction L-aspartyl-tRNA(Asn) + L-glutamine + ATP + H2O = L-asparaginyl-tRNA(Asn) + L-glutamate + ADP + phosphate + 2 H(+). Its function is as follows. Allows the formation of correctly charged Asn-tRNA(Asn) or Gln-tRNA(Gln) through the transamidation of misacylated Asp-tRNA(Asn) or Glu-tRNA(Gln) in organisms which lack either or both of asparaginyl-tRNA or glutaminyl-tRNA synthetases. The reaction takes place in the presence of glutamine and ATP through an activated phospho-Asp-tRNA(Asn) or phospho-Glu-tRNA(Gln). The sequence is that of Aspartyl/glutamyl-tRNA(Asn/Gln) amidotransferase subunit B from Tropheryma whipplei (strain Twist) (Whipple's bacillus).